A 70-amino-acid chain; its full sequence is Protein 4.3 (70 aa).

This chain is Protein 4.3, found in Escherichia coli (Bacteriophage T7).